Here is a 364-residue protein sequence, read N- to C-terminus: Aminomethyltransferase (364 aa).

It belongs to the GcvT family. The glycine cleavage system is composed of four proteins: P, T, L and H.

The catalysed reaction is N(6)-[(R)-S(8)-aminomethyldihydrolipoyl]-L-lysyl-[protein] + (6S)-5,6,7,8-tetrahydrofolate = N(6)-[(R)-dihydrolipoyl]-L-lysyl-[protein] + (6R)-5,10-methylene-5,6,7,8-tetrahydrofolate + NH4(+). In terms of biological role, the glycine cleavage system catalyzes the degradation of glycine. The sequence is that of Aminomethyltransferase from Desulforamulus reducens (strain ATCC BAA-1160 / DSM 100696 / MI-1) (Desulfotomaculum reducens).